A 318-amino-acid chain; its full sequence is Bis(5'-nucleosyl)-tetraphosphatase, symmetrical (318 aa).

The disordered stretch occupies residues 269–318 (PGREVTGPAPVARAPRRPRERLGRQRSRGNRGNAGNTAVPAKPPVDTPQD). Over residues 282 to 297 (APRRPRERLGRQRSRG) the composition is skewed to basic residues. Residues 309–318 (AKPPVDTPQD) are compositionally biased toward pro residues.

Belongs to the Ap4A hydrolase family.

It carries out the reaction P(1),P(4)-bis(5'-adenosyl) tetraphosphate + H2O = 2 ADP + 2 H(+). Hydrolyzes diadenosine 5',5'''-P1,P4-tetraphosphate to yield ADP. The sequence is that of Bis(5'-nucleosyl)-tetraphosphatase, symmetrical from Xanthomonas oryzae pv. oryzae (strain PXO99A).